Reading from the N-terminus, the 211-residue chain is 3-demethoxyubiquinol 3-hydroxylase (211 aa).

Fe cation is bound by residues Glu-60, Glu-90, His-93, Glu-142, Glu-174, and His-177.

This sequence belongs to the COQ7 family. The cofactor is Fe cation.

The protein resides in the cell membrane. The enzyme catalyses a 5-methoxy-2-methyl-3-(all-trans-polyprenyl)benzene-1,4-diol + AH2 + O2 = a 3-demethylubiquinol + A + H2O. Its pathway is cofactor biosynthesis; ubiquinone biosynthesis. Functionally, catalyzes the hydroxylation of 2-nonaprenyl-3-methyl-6-methoxy-1,4-benzoquinol during ubiquinone biosynthesis. The sequence is that of 3-demethoxyubiquinol 3-hydroxylase from Acinetobacter baylyi (strain ATCC 33305 / BD413 / ADP1).